Here is a 451-residue protein sequence, read N- to C-terminus: MDFSTNDTIAAIATAPGRGGVGIVRVSGIKAAEIAEHVLGKCPKPRYAHYGPFLGAEGQVLDQGIALFFPNPHSFTGENVLELQGHGGPVILQWLLERVVQLGARLAEPGEFSKQAFLNDKLDLAQAEAIADLIDASSQQAARSALRSLQGDFSNQVNELVEQLIQLRIYVEAAIDFPEEEIDFLSDGKVAGQLQHILEQLHRVLASAQQGVLLREGMSVVILGRPNAGKSSLLNALSGRESAIVTDIAGTTRDIVKEEIQIDGMPLHVLDTAGLREATDAVEQIGIQRAWAAIEEADRILVMVQANEAIHPEDQAILEKMPSHIPVTLIHNKIDLIEKSPELSENDGETEIWLSAKHHLGLDLLKQHLKTEMGYAQTEEGVFMARKRHLEALETALHFVETGQQQLEHFAAGELLAEDLRQAQQALSEITGQFTSDDLLGRIFTSFCIGK.

3 residues coordinate (6S)-5-formyl-5,6,7,8-tetrahydrofolate: Arg-25, Glu-82, and Lys-121. Positions Gly-217–Gly-374 constitute a TrmE-type G domain. A K(+)-binding site is contributed by Asn-227. GTP contacts are provided by residues Asn-227–Ser-232, Thr-246–Thr-252, and Asp-271–Gly-274. Mg(2+) is bound at residue Ser-231. Residues Thr-246, Ile-248, and Thr-251 each contribute to the K(+) site. Mg(2+) is bound at residue Thr-252. Lys-451 contacts (6S)-5-formyl-5,6,7,8-tetrahydrofolate.

This sequence belongs to the TRAFAC class TrmE-Era-EngA-EngB-Septin-like GTPase superfamily. TrmE GTPase family. As to quaternary structure, homodimer. Heterotetramer of two MnmE and two MnmG subunits. Requires K(+) as cofactor.

The protein localises to the cytoplasm. Exhibits a very high intrinsic GTPase hydrolysis rate. Involved in the addition of a carboxymethylaminomethyl (cmnm) group at the wobble position (U34) of certain tRNAs, forming tRNA-cmnm(5)s(2)U34. The protein is tRNA modification GTPase MnmE of Hydrogenovibrio crunogenus (strain DSM 25203 / XCL-2) (Thiomicrospira crunogena).